We begin with the raw amino-acid sequence, 690 residues long: Proprotein convertase subtilisin/kexin type 9 (690 aa).

Residues 1–28 (MGTVSSRRSWWPLPLLLLLLLGPAGARA) form the signal peptide. A propeptide spanning residues 29–150 (QEDEDGDYEE…IEEDSSVFAQ (122 aa)) is cleaved from the precursor. Tyr36 carries the post-translational modification Sulfotyrosine. Ser45 carries the post-translational modification Phosphoserine. In terms of domain architecture, Inhibitor I9 spans 75 to 147 (TYVVVLKEET…VDYIEEDSSV (73 aa)). The Peptidase S8 domain occupies 153–459 (PWNLERITPP…GWQLFCRTVW (307 aa)). Active-site charge relay system residues include Asp184 and His224. Cystine bridges form between Cys221-Cys253 and Cys321-Cys356. The active-site Charge relay system is Ser384. A C-terminal domain region spans residues 448 to 690 (GAGWQLFCRT…HLVQASQELQ (243 aa)). 3 disulfides stabilise this stretch: Cys455–Cys525, Cys475–Cys524, and Cys484–Cys507. Asn531 is a glycosylation site (N-linked (GlcNAc...) asparagine). Cystine bridges form between Cys532–Cys599, Cys550–Cys598, Cys560–Cys586, Cys606–Cys677, Cys624–Cys676, and Cys633–Cys652. Phosphoserine is present on Ser686.

It belongs to the peptidase S8 family. In terms of assembly, monomer. Can self-associate to form dimers and higher multimers which may have increased LDLR degrading activity. The precursor protein but not the mature protein may form multimers. Interacts with APOB, VLDLR, LRP8/APOER2 and BACE1. The full-length immature form (pro-PCSK9) interacts with SCNN1A, SCNN1B and SCNN1G. The pro-PCSK9 form (via C-terminal domain) interacts with LDLR. Interacts (via the C-terminal domain) with ANXA2 (via repeat Annexin 1); the interaction inhibits the degradation of LDLR. The cofactor is Ca(2+). Post-translationally, cleavage by furin and PCSK5 generates a truncated inactive protein that is unable to induce LDLR degradation. Undergoes autocatalytic cleavage in the endoplasmic reticulum to release the propeptide from the N-terminus and the cleavage of the propeptide is strictly required for its maturation and activation. The cleaved propeptide however remains associated with the catalytic domain through non-covalent interactions, preventing potential substrates from accessing its active site. As a result, it is secreted from cells as a propeptide-containing, enzymatically inactive protein. In terms of processing, phosphorylation protects the propeptide against proteolysis.

It localises to the cytoplasm. The protein resides in the secreted. The protein localises to the endosome. Its subcellular location is the lysosome. It is found in the cell surface. It localises to the endoplasmic reticulum. The protein resides in the golgi apparatus. Its proteolytic activity is autoinhibited by the non-covalent binding of the propeptide to the catalytic domain. Inhibited by EGTA. Functionally, crucial player in the regulation of plasma cholesterol homeostasis. Binds to low-density lipid receptor family members: low density lipoprotein receptor (LDLR), very low density lipoprotein receptor (VLDLR), apolipoprotein E receptor (LRP1/APOER) and apolipoprotein receptor 2 (LRP8/APOER2), and promotes their degradation in intracellular acidic compartments. Acts via a non-proteolytic mechanism to enhance the degradation of the hepatic LDLR through a clathrin LDLRAP1/ARH-mediated pathway. May prevent the recycling of LDLR from endosomes to the cell surface or direct it to lysosomes for degradation. Can induce ubiquitination of LDLR leading to its subsequent degradation. Inhibits intracellular degradation of APOB via the autophagosome/lysosome pathway in a LDLR-independent manner. Involved in the disposal of non-acetylated intermediates of BACE1 in the early secretory pathway. Inhibits epithelial Na(+) channel (ENaC)-mediated Na(+) absorption by reducing ENaC surface expression primarily by increasing its proteasomal degradation. Regulates neuronal apoptosis via modulation of LRP8/APOER2 levels and related anti-apoptotic signaling pathways. This Gorilla gorilla gorilla (Western lowland gorilla) protein is Proprotein convertase subtilisin/kexin type 9 (PCSK9).